We begin with the raw amino-acid sequence, 326 residues long: Protein phosphatase PTC7 homolog fig (326 aa).

Positions 40 to 83 (VQGKSKPRSPHLTSPQCSPEHRPRRFRPPSASGRTAFSSAPRPK) are disordered. The PPM-type phosphatase domain occupies 64 to 314 (RFRPPSASGR…DDITVVLASV (251 aa)). Positions 91, 92, and 236 each coordinate Mn(2+).

It belongs to the PP2C family. Mg(2+) serves as cofactor. Mn(2+) is required as a cofactor.

The catalysed reaction is O-phospho-L-seryl-[protein] + H2O = L-seryl-[protein] + phosphate. It catalyses the reaction O-phospho-L-threonyl-[protein] + H2O = L-threonyl-[protein] + phosphate. The chain is Protein phosphatase PTC7 homolog fig from Drosophila persimilis (Fruit fly).